A 147-amino-acid chain; its full sequence is MVHFTAEEKAIITSLWAKVNVEETGGEALGRLLVVYPWTQRFFDNFGNLSSASAIMGNPKVKAHGKKVLSSLGEAVTHMDDLKDAFAHLSELHCDRLHVDPENFRLLGNVLVIVLAHHFGREFTPQVQAAWKKLMSAVAIALGHKYH.

A Globin domain is found at 3 to 147 (HFTAEEKAII…VAIALGHKYH (145 aa)). Heme b is bound by residues His64 and His93.

This sequence belongs to the globin family. As to quaternary structure, heterotetramer of two alpha chains and two gamma chains in fetal hemoglobin (Hb F). Red blood cells.

In terms of biological role, gamma chains make up the fetal hemoglobin F, in combination with alpha chains. This Cephalopachus bancanus (Western tarsier) protein is Hemoglobin subunit gamma (HBG).